Reading from the N-terminus, the 214-residue chain is Orotate phosphoribosyltransferase (214 aa).

Lys26 contacts 5-phospho-alpha-D-ribose 1-diphosphate. 34-35 (FF) is a binding site for orotate. 5-phospho-alpha-D-ribose 1-diphosphate is bound by residues 72–73 (YK), Arg98, Lys99, Lys102, His104, and 123–131 (DDVISAGTS). Orotate contacts are provided by Ser127 and Arg155.

It belongs to the purine/pyrimidine phosphoribosyltransferase family. PyrE subfamily. In terms of assembly, homodimer. Mg(2+) serves as cofactor.

It catalyses the reaction orotidine 5'-phosphate + diphosphate = orotate + 5-phospho-alpha-D-ribose 1-diphosphate. It functions in the pathway pyrimidine metabolism; UMP biosynthesis via de novo pathway; UMP from orotate: step 1/2. Catalyzes the transfer of a ribosyl phosphate group from 5-phosphoribose 1-diphosphate to orotate, leading to the formation of orotidine monophosphate (OMP). In Chromobacterium violaceum (strain ATCC 12472 / DSM 30191 / JCM 1249 / CCUG 213 / NBRC 12614 / NCIMB 9131 / NCTC 9757 / MK), this protein is Orotate phosphoribosyltransferase.